Reading from the N-terminus, the 285-residue chain is MTNKPLYDQDSTLKNLSLGKITEYKSSYDPTLLQAVPRSLNRNELQLSEHNLPFYGVDLWNIYELSWLNSKGKPVVATGVVKVPFDSKNLIESKSFKLYLNSFNQSKFVSIEAVQKVLTADLSHCADKAVSVELHTDLDNFSDKLGTFSGQCLDVLDIEIDNYQLNADYLQDLSSQEQVTETLYSHLLKSNCLITSQPDWASIEISYTGKKLDREKLLRYLISFRQHNEFHEQCVERIYCDIMKFGQIDSLCVYARYTRRGGLDINPLRTTEHINEINNLRLLRQ.

A substrate-binding site is contributed by 91 to 93 (IES). 93 to 94 (SK) serves as a coordination point for NADPH. Residue Cys-192 is the Thioimide intermediate of the active site. Asp-199 acts as the Proton donor in catalysis. Position 231–232 (231–232 (HE)) interacts with substrate. 260-261 (RG) is a binding site for NADPH.

Belongs to the GTP cyclohydrolase I family. QueF type 2 subfamily. Homodimer.

It is found in the cytoplasm. It catalyses the reaction 7-aminomethyl-7-carbaguanine + 2 NADP(+) = 7-cyano-7-deazaguanine + 2 NADPH + 3 H(+). The protein operates within tRNA modification; tRNA-queuosine biosynthesis. Catalyzes the NADPH-dependent reduction of 7-cyano-7-deazaguanine (preQ0) to 7-aminomethyl-7-deazaguanine (preQ1). In Psychromonas ingrahamii (strain DSM 17664 / CCUG 51855 / 37), this protein is NADPH-dependent 7-cyano-7-deazaguanine reductase.